Reading from the N-terminus, the 181-residue chain is Caltractin ICL1d (181 aa).

The interval 1–29 is disordered; that stretch reads MARRGQQPPPQQAPPAQKNQTGKFNPAEF. EF-hand domains lie at 37–72, 73–108, 110–145, and 146–181; these read EEVL…LGFE, AKNQ…RISE, DSKA…LGET, and MDDS…KTFA. Asp50, Asp52, Thr54, Ser56, Glu61, Asp86, Asp88, Ser90, Gln92, and Glu97 together coordinate Ca(2+).

The protein belongs to the centrin family. As to quaternary structure, monomer.

The protein resides in the cytoplasm. Its subcellular location is the cytoskeleton. Functionally, plays a fundamental role in microtubule organizing center structure and function. Component of the infraciliary lattice (ICL) and the ciliary basal bodies. This Paramecium tetraurelia protein is Caltractin ICL1d (Icl1d).